We begin with the raw amino-acid sequence, 336 residues long: Cytochrome P450 monooxygenase lcsN (336 aa).

Residue Cys-271 participates in heme binding.

Belongs to the cytochrome P450 family. The cofactor is heme.

It participates in secondary metabolite biosynthesis. Cytochrome P450 monooxygenase; part of the gene cluster that mediates the biosynthesis of the lipopeptide antibiotics leucinostatins that show extensive biological activities, including antimalarial, antiviral, antibacterial, antifungal, and antitumor activities, as well as phytotoxic. Leucinostatin A contains nine amino acid residues, including the unusual amino acid 4-methyl-L-proline (MePro), 2-amino-6-hydroxy-4-methyl-8-oxodecanoic acid (AHyMeOA), 3-hydroxyleucine (HyLeu), alpha-aminoisobutyric acid (AIB), beta-Ala, a 4-methylhex-2-enoic acid at the N-terminus as well as a N1,N1-dimethylpropane-1,2-diamine (DPD) at the C-terminus. The biosynthesis of leucinostatins is probably initiated with the assembly of 4-methylhex-2-enoic acid by a reducing PKS. Two reducing polyketide synthases, lcsB and lcsC, have been identified in the cluster and it is not clear which is the one that assembles 4-methylhex-2-enoic acid since both contain KS, AT, DH, cMT, ER, KR and ACP domains. The polyketide residue might be transferred to the NRPS lcsA, mediated by two additional enzymes, the acyl-CoA ligase lcsD and the thioesterase lcsE. The linear polyketide carboxylic acid, which is released from PKS, is converted to a CoA thioester by lcsD, and then lcsE hydrolyzes the thiol bond and shuttles the polyketide intermediate to lcsA. The C domain of the first module catalyzed the condensation of 4-methylhex-2-enoic acid and MePro carried by domain A1, followed by successive condensations of nine amino acids to trigger the elongation of the linear peptide. A5 and A6 domains of lcsA are proposed to incorporate leucine, A2 AHyMeOA, and A3 incorporates HyLeu. A4, A7 and A8 incorporate AIB. The AHyMeOA in leucinostatin A activated by the A2 might be produced by the second PKS (lcsB or lcsC) present within the cluster. The MePro is probably produced via leucine cyclization and may originate from a separate pathway, independent of the cluster. Another nonproteinogenic amino acid, beta-Ala, could be produced by an aspartic acid decarboxylase also localized outside of the cluster. Two candidates are VFPBJ_01400 and VFPBJ_10476. The final peptide scaffold may be released by the NAD(P)H-dependent thioester reductase (TE) at the C-terminal region of lcsA. Transamination of the lcsA product by the transaminase lcsP may produce DPD at the C-terminus. Further hydroxylation steps performed alternatively by the cytochrome P450 monooxygenases lcsI, lcsK and lcsN then yield the non-methylated leucinostatins precursor. It is also possible that leucines can be hydroxylated prior to their incorporation into the peptide. Varying extents of methylation then lead to the formation of leucinostatins A and B. This chain is Cytochrome P450 monooxygenase lcsN, found in Purpureocillium lilacinum (Paecilomyces lilacinus).